Consider the following 555-residue polypeptide: CTP synthase (555 aa).

Positions 1–279 (MATNRAKSST…DNYIIRRLNL (279 aa)) are amidoligase domain. Ser-21 provides a ligand contact to CTP. Ser-21 lines the UTP pocket. ATP is bound by residues 22 to 27 (SLGKGL) and Asp-79. Residues Asp-79 and Glu-153 each coordinate Mg(2+). Residues 160-162 (DIE), 200-205 (KTKPTQ), and Lys-236 contribute to the CTP site. Residues 200–205 (KTKPTQ) and Lys-236 contribute to the UTP site. In terms of domain architecture, Glutamine amidotransferase type-1 spans 304–553 (TIGIVGKYID…VDAALKHQAG (250 aa)). Gly-367 lines the L-glutamine pocket. Residue Cys-394 is the Nucleophile; for glutamine hydrolysis of the active site. L-glutamine contacts are provided by residues 395 to 398 (LGLQ), Glu-417, and Arg-478. Residues His-526 and Glu-528 contribute to the active site.

The protein belongs to the CTP synthase family. As to quaternary structure, homotetramer.

It carries out the reaction UTP + L-glutamine + ATP + H2O = CTP + L-glutamate + ADP + phosphate + 2 H(+). The catalysed reaction is L-glutamine + H2O = L-glutamate + NH4(+). It catalyses the reaction UTP + NH4(+) + ATP = CTP + ADP + phosphate + 2 H(+). It participates in pyrimidine metabolism; CTP biosynthesis via de novo pathway; CTP from UDP: step 2/2. Its activity is regulated as follows. Allosterically activated by GTP, when glutamine is the substrate; GTP has no effect on the reaction when ammonia is the substrate. The allosteric effector GTP functions by stabilizing the protein conformation that binds the tetrahedral intermediate(s) formed during glutamine hydrolysis. Inhibited by the product CTP, via allosteric rather than competitive inhibition. Catalyzes the ATP-dependent amination of UTP to CTP with either L-glutamine or ammonia as the source of nitrogen. Regulates intracellular CTP levels through interactions with the four ribonucleotide triphosphates. This Corynebacterium jeikeium (strain K411) protein is CTP synthase.